The chain runs to 386 residues: Mannitol-1-phosphate 5-dehydrogenase (386 aa).

A4 to G15 serves as a coordination point for NAD(+).

Belongs to the mannitol dehydrogenase family.

It carries out the reaction D-mannitol 1-phosphate + NAD(+) = beta-D-fructose 6-phosphate + NADH + H(+). This chain is Mannitol-1-phosphate 5-dehydrogenase, found in Oceanobacillus iheyensis (strain DSM 14371 / CIP 107618 / JCM 11309 / KCTC 3954 / HTE831).